A 1066-amino-acid chain; its full sequence is MALDGERGEQEEEKKKKKKKKKRKKKEEEGAEKSSSPFAATMGEDDAALRASGRGLSDPWADSVGVRPRTTERHIAVHKRLVLAFAVSIVALLAVTMLAVLLSLRFDECGASAAMPGTDGGLGGFPERDSNSSFPGSARRNHHAGGESSQRESGEVGTPGTPSAQPPSEEEREQWQPWTQLRLSGHLKPLHYNLMLTAFMENFTFSGEVNVEIACRNATRYVVLHASRVAVEKVQVAEDRAFGAVPVAGFFLYPQTQVLVVVLNRTLDAQRHYNLKIIYNALIENELLGFFRSSYVIHGERRFLGVTQFSPTHARKAFPCFDEPIYKATFKISIKHQATYLSLSNMPVETSVFEEDGWVTDHFSQTPLMSTYYLAWAICNFTYRETTTKSGVVVRLYARPDAIRRGSGDYALHITKRLIEFYEDYFKVPYSLPKLDLLAVPKHPYAAMENWGLSIFVEQRILLDPSVSSISYLLDVTMVIVHEICHQWFGDLVTPVWWEDVWLKEGFAHYFEFVGTDYLYPAWNMEKQRFLTDVLHEVMLLDGLASSHPVSQEVLRATDIDRVFDWIAYKKGAALIRMLANFMGHSVFQRGLQDYLTIHKYGNAARNDLWNTLSEALRRNGKYVNIQEVMDQWTLQMGYPVITILGNTTAENRILITQQHFIYDIGAKTKALQLQNSSYLWQIPLTIVVGNRSHVSSEAIIWVSNKSEHHRIAYLDRGSWILGNINQTGYFRVNYDLRNWRLLIDQLIRNHEVLSVSNRAALIDDAFSLARAGYLPQNIPLEIIRYLSEEKDFLPWHAASRALYPLDKLLDRMENYNIFNEYILKQVATTYIKLGWPRNNFNGSLVQASYQHEELRREVIMLACSFGNKHCHQQASTLISDWISSNRNRIPLNVRDIVYCTGVSLLDEDVWEFIWMKFHSTTAVSEKKILLEALTCSDDRNLLSRLLNLSLNSEVVLDQDAIDVIIHVARNPHGRDLAWKFFRDKWKILNTRYGEALFMNSKLISGVTEFLNTEGELKELKNFMKSYDGVASASFSRAVETVEANVRWKRFYQDELFQWLGKAMRH.

Basic and acidic residues predominate over residues 1–14; that stretch reads MALDGERGEQEEEK. The interval 1-43 is disordered; the sequence is MALDGERGEQEEEKKKKKKKKKRKKKEEEGAEKSSSPFAATMG. At 1–81 the chain is on the cytoplasmic side; it reads MALDGERGEQ…ERHIAVHKRL (81 aa). The segment covering 15–25 has biased composition (basic residues); the sequence is KKKKKKKKRKK. Threonine 71 carries the phosphothreonine; by PKC modification. Residues 82–102 traverse the membrane as a helical; Signal-anchor for type II membrane protein segment; the sequence is VLAFAVSIVALLAVTMLAVLL. At 103–1066 the chain is on the extracellular side; it reads SLRFDECGAS…FQWLGKAMRH (964 aa). Positions 118 to 176 are disordered; the sequence is TDGGLGGFPERDSNSSFPGSARRNHHAGGESSQRESGEVGTPGTPSAQPPSEEEREQWQ. Asparagine 131, asparagine 202, asparagine 217, asparagine 264, and asparagine 380 each carry an N-linked (GlcNAc...) asparagine glycan. Substrate is bound at residue 446–450; sequence AAMEN. Histidine 482 lines the Zn(2+) pocket. Glutamate 483 acts as the Proton acceptor in catalysis. The Zn(2+) site is built by histidine 486 and glutamate 505. N-linked (GlcNAc...) asparagine glycosylation is found at asparagine 647, asparagine 676, asparagine 691, asparagine 705, asparagine 726, asparagine 842, and asparagine 948.

Belongs to the peptidase M1 family. Homodimer; disulfide-linked. It depends on Zn(2+) as a cofactor.

It is found in the membrane. It carries out the reaction Release of the N-terminal pyroglutamyl group from pGlu-|-His-Xaa tripeptides and pGlu-|-His-Xaa-Gly tetrapeptides.. Its function is as follows. Specific inactivation of TRH after its release. The sequence is that of Thyrotropin-releasing hormone-degrading ectoenzyme (Trhde) from Mus musculus (Mouse).